We begin with the raw amino-acid sequence, 647 residues long: NADP-dependent malic enzyme, chloroplastic (647 aa).

Residues M1–A61 constitute a chloroplast transit peptide. The active-site Proton donor is Y195. R248 serves as a coordination point for NAD(+). The active-site Proton acceptor is K266. Residues E338, D339, and D362 each coordinate a divalent metal cation. D362 provides a ligand contact to NAD(+). Position 391–407 (L391–A407) interacts with NADP(+). Position 503 (N503) interacts with NAD(+).

It belongs to the malic enzymes family. As to quaternary structure, homotetramer. Requires Mg(2+) as cofactor. The cofactor is Mn(2+).

It is found in the plastid. The protein resides in the chloroplast. The catalysed reaction is (S)-malate + NADP(+) = pyruvate + CO2 + NADPH. It carries out the reaction oxaloacetate + H(+) = pyruvate + CO2. It functions in the pathway photosynthesis; C3 acid pathway. The chloroplastic ME isoform decarboxylates malate shuttled from neighboring mesophyll cells. The CO(2) released is then refixed by ribulose-bisphosphate carboxylase. This pathway eliminates the photorespiratory loss of CO(2) that occurs in most plants. The protein is NADP-dependent malic enzyme, chloroplastic (MODA) of Flaveria pringlei.